A 210-amino-acid polypeptide reads, in one-letter code: Ribosomal RNA large subunit methyltransferase E (210 aa).

S-adenosyl-L-methionine-binding residues include glycine 60, tryptophan 62, aspartate 85, aspartate 101, and aspartate 126. Residue lysine 166 is the Proton acceptor of the active site.

Belongs to the class I-like SAM-binding methyltransferase superfamily. RNA methyltransferase RlmE family.

It is found in the cytoplasm. The catalysed reaction is uridine(2552) in 23S rRNA + S-adenosyl-L-methionine = 2'-O-methyluridine(2552) in 23S rRNA + S-adenosyl-L-homocysteine + H(+). In terms of biological role, specifically methylates the uridine in position 2552 of 23S rRNA at the 2'-O position of the ribose in the fully assembled 50S ribosomal subunit. In Bordetella pertussis (strain Tohama I / ATCC BAA-589 / NCTC 13251), this protein is Ribosomal RNA large subunit methyltransferase E.